A 325-amino-acid chain; its full sequence is Elongation factor P--(R)-beta-lysine ligase (325 aa).

76–78 (SPE) is a binding site for substrate. ATP-binding positions include 100–102 (RNE) and asparagine 109. Tyrosine 118 is a binding site for substrate. 244 to 245 (EL) contacts ATP. Residue glutamate 251 coordinates substrate. Residue glycine 300 participates in ATP binding.

Belongs to the class-II aminoacyl-tRNA synthetase family. EpmA subfamily. Homodimer.

It catalyses the reaction D-beta-lysine + L-lysyl-[protein] + ATP = N(6)-((3R)-3,6-diaminohexanoyl)-L-lysyl-[protein] + AMP + diphosphate + H(+). With EpmB is involved in the beta-lysylation step of the post-translational modification of translation elongation factor P (EF-P). Catalyzes the ATP-dependent activation of (R)-beta-lysine produced by EpmB, forming a lysyl-adenylate, from which the beta-lysyl moiety is then transferred to the epsilon-amino group of a conserved specific lysine residue in EF-P. The polypeptide is Elongation factor P--(R)-beta-lysine ligase (Hamiltonella defensa subsp. Acyrthosiphon pisum (strain 5AT)).